A 291-amino-acid chain; its full sequence is Potassium-transporting ATPase subunit beta (291 aa).

The Cytoplasmic segment spans residues 1-36 (MAALQEKKTCGQRMEEFQRYCWNPDTGQMLGRTLSR). Residues 37 to 57 (WVWISLYYVAFYVVMTGLFAL) traverse the membrane as a helical; Signal-anchor for type II membrane protein segment. The Extracellular portion of the chain corresponds to 58–291 (CLYVLMQTVD…KVEFKLKIEK (234 aa)). Residues Asn99, Asn103, Asn130, Asn146, and Asn161 are each glycosylated (N-linked (GlcNAc...) asparagine). Cys131 and Cys152 are oxidised to a cystine. Cys162 and Cys178 are disulfide-bonded. Residues Asn193 and Asn222 are each glycosylated (N-linked (GlcNAc...) asparagine). An immunoglobulin-like region spans residues 194-291 (GSAPRVDCAF…KVEFKLKIEK (98 aa)). The cysteines at positions 201 and 263 are disulfide-linked.

The protein belongs to the X(+)/potassium ATPases subunit beta family. In terms of assembly, the ATPase pump is composed of two subunits: alpha (catalytic) and beta (regulatory). Interacts with alpha subunit ATP12A; this interaction is required for the formation of a functionally active pump and targeting at the plasma membrane. Interacts (via N-terminus) with alpha subunit ATP4A (via the P-domain). Post-translationally, N-glycosylation is necessary for assembly and functional expression of the pump at the plasma membrane.

It localises to the apical cell membrane. The protein localises to the cell membrane. In terms of biological role, the beta subunit of the gastric H(+)/K(+) ATPase pump which transports H(+) ions in exchange for K(+) ions across the apical membrane of parietal cells. Plays a structural and regulatory role in the assembly and membrane targeting of a functionally active pump. Within a transport cycle, the transfer of a H(+) ion across the membrane is coupled to ATP hydrolysis and is associated with a transient phosphorylation of the alpha subunit that shifts the pump conformation from inward-facing (E1) to outward-facing state (E2). Interacts with the phosphorylation domain of the alpha subunit and functions as a ratchet, stabilizing the lumenal-open E2 conformation and preventing the reverse reaction of the transport cycle. In Homo sapiens (Human), this protein is Potassium-transporting ATPase subunit beta.